Consider the following 399-residue polypeptide: Coenzyme A biosynthesis bifunctional protein CoaBC (399 aa).

Residues 1-190 are phosphopantothenoylcysteine decarboxylase; sequence MQTLAGKKIL…FQPKVLEGKS (190 aa). Cys159 (proton donor) is an active-site residue. Positions 191 to 399 are phosphopantothenate--cysteine ligase; it reads ILISAGPTRE…KILEKMRELM (209 aa). CTP-binding positions include Asp279, Lys289, 307–310, Phe326, Lys340, and Lys344; that span reads PDIV.

In the N-terminal section; belongs to the HFCD (homo-oligomeric flavin containing Cys decarboxylase) superfamily. The protein in the C-terminal section; belongs to the PPC synthetase family. Requires Mg(2+) as cofactor. FMN is required as a cofactor.

It catalyses the reaction N-[(R)-4-phosphopantothenoyl]-L-cysteine + H(+) = (R)-4'-phosphopantetheine + CO2. It carries out the reaction (R)-4'-phosphopantothenate + L-cysteine + CTP = N-[(R)-4-phosphopantothenoyl]-L-cysteine + CMP + diphosphate + H(+). The protein operates within cofactor biosynthesis; coenzyme A biosynthesis; CoA from (R)-pantothenate: step 2/5. It functions in the pathway cofactor biosynthesis; coenzyme A biosynthesis; CoA from (R)-pantothenate: step 3/5. In terms of biological role, catalyzes two sequential steps in the biosynthesis of coenzyme A. In the first step cysteine is conjugated to 4'-phosphopantothenate to form 4-phosphopantothenoylcysteine. In the second step the latter compound is decarboxylated to form 4'-phosphopantotheine. This Vibrio parahaemolyticus serotype O3:K6 (strain RIMD 2210633) protein is Coenzyme A biosynthesis bifunctional protein CoaBC.